The primary structure comprises 473 residues: Argininosuccinate lyase (473 aa).

This sequence belongs to the lyase 1 family. Argininosuccinate lyase subfamily.

It localises to the cytoplasm. The catalysed reaction is 2-(N(omega)-L-arginino)succinate = fumarate + L-arginine. The protein operates within amino-acid biosynthesis; L-arginine biosynthesis; L-arginine from L-ornithine and carbamoyl phosphate: step 3/3. The sequence is that of Argininosuccinate lyase from Nocardia farcinica (strain IFM 10152).